We begin with the raw amino-acid sequence, 718 residues long: Exostosin-2 (718 aa).

The Cytoplasmic segment spans residues M1–Y25. A helical; Signal-anchor for type II membrane protein membrane pass occupies residues Y26–W46. Topologically, residues P47–L718 are lumenal. Intrachain disulfides connect C85/C90, C96/C151, C286/C300, and C318/C339. An N-linked (GlcNAc...) asparagine glycan is attached at N288. The UDP site is built by L461, R465, N490, and N517. Residues R465, N490, N517, R522, D538, D539, and D540 each coordinate UDP-N-acetyl-alpha-D-glucosamine. UDP contacts are provided by D538 and D539. Residue D540 participates in Mn(2+) binding. A protein contacts are provided by Y582 and S584. C626 and C676 are joined by a disulfide. Residues E627 and D628 each contribute to the UDP-N-acetyl-alpha-D-glucosamine site. An N-linked (GlcNAc...) asparagine glycan is attached at N637. K651 and K653 together coordinate a protein. R673 serves as a coordination point for UDP-N-acetyl-alpha-D-glucosamine.

This sequence belongs to the glycosyltransferase 47 family. As to quaternary structure, part of the heparan sulfate polymerase, a dimeric complex composed of EXT1 and EXT2. Could also form homooligomeric complexes. Interacts with NDST1. Interacts with GALNT5. It depends on Mn(2+) as a cofactor. Post-translationally, N-glycosylated at Asn-637. In terms of processing, a soluble form is generated by proteolytic processing. Expressed in heart, brain, spleen, lung, liver, skeletal muscle and testis. Heart shows a high expression.

It localises to the golgi apparatus membrane. It is found in the golgi apparatus. Its subcellular location is the cis-Golgi network membrane. The protein localises to the endoplasmic reticulum membrane. The protein resides in the secreted. The enzyme catalyses 3-O-{[(1-&gt;4)-beta-D-GlcA-(1-&gt;4)-alpha-D-GlcNAc](n)-(1-&gt;4)-beta-D-GlcA-(1-&gt;3)-beta-D-Gal-(1-&gt;3)-beta-D-Gal-(1-&gt;4)-beta-D-Xyl}-L-seryl-[protein] + UDP-N-acetyl-alpha-D-glucosamine = 3-O-{alpha-D-GlcNAc-[(1-&gt;4)-beta-D-GlcA-(1-&gt;4)-alpha-D-GlcNAc](n)-(1-&gt;4)-beta-D-GlcA-(1-&gt;3)-beta-D-Gal-(1-&gt;3)-beta-D-Gal-(1-&gt;4)-beta-D-Xyl}-L-seryl-[protein] + UDP + H(+). The protein operates within protein modification; protein glycosylation. In terms of biological role, glycosyltransferase forming with EXT1 the heterodimeric heparan sulfate polymerase which catalyzes the elongation of the heparan sulfate glycan backbone. Glycan backbone extension consists in the alternating transfer of (1-&gt;4)-beta-D-GlcA and (1-&gt;4)-alpha-D-GlcNAc residues from their respective UDP-sugar donors. Both EXT1 and EXT2 are required for the full activity of the polymerase since EXT1 bears the N-acetylglucosaminyl-proteoglycan 4-beta-glucuronosyltransferase activity within the complex while EXT2 carries the glucuronosyl-N-acetylglucosaminyl-proteoglycan 4-alpha-N-acetylglucosaminyltransferase activity. Heparan sulfate proteoglycans are ubiquitous components of the extracellular matrix and play an important role in tissue homeostasis and signaling. The protein is Exostosin-2 of Mus musculus (Mouse).